The following is a 298-amino-acid chain: Ribosomal RNA small subunit methyltransferase A (298 aa).

Residues asparagine 35, leucine 37, glycine 62, glutamate 83, aspartate 108, and asparagine 133 each contribute to the S-adenosyl-L-methionine site.

It belongs to the class I-like SAM-binding methyltransferase superfamily. rRNA adenine N(6)-methyltransferase family. RsmA subfamily.

It is found in the cytoplasm. It catalyses the reaction adenosine(1518)/adenosine(1519) in 16S rRNA + 4 S-adenosyl-L-methionine = N(6)-dimethyladenosine(1518)/N(6)-dimethyladenosine(1519) in 16S rRNA + 4 S-adenosyl-L-homocysteine + 4 H(+). Its function is as follows. Specifically dimethylates two adjacent adenosines (A1518 and A1519) in the loop of a conserved hairpin near the 3'-end of 16S rRNA in the 30S particle. May play a critical role in biogenesis of 30S subunits. This chain is Ribosomal RNA small subunit methyltransferase A, found in Streptococcus pyogenes serotype M2 (strain MGAS10270).